Here is a 425-residue protein sequence, read N- to C-terminus: Serine--tRNA ligase (425 aa).

Residue 230–232 (TAE) coordinates L-serine. 261 to 263 (RSE) lines the ATP pocket. E284 serves as a coordination point for L-serine. Residue 348–351 (EISS) coordinates ATP. S384 provides a ligand contact to L-serine.

The protein belongs to the class-II aminoacyl-tRNA synthetase family. Type-1 seryl-tRNA synthetase subfamily. In terms of assembly, homodimer. The tRNA molecule binds across the dimer.

The protein resides in the cytoplasm. The enzyme catalyses tRNA(Ser) + L-serine + ATP = L-seryl-tRNA(Ser) + AMP + diphosphate + H(+). It carries out the reaction tRNA(Sec) + L-serine + ATP = L-seryl-tRNA(Sec) + AMP + diphosphate + H(+). It functions in the pathway aminoacyl-tRNA biosynthesis; selenocysteinyl-tRNA(Sec) biosynthesis; L-seryl-tRNA(Sec) from L-serine and tRNA(Sec): step 1/1. Its function is as follows. Catalyzes the attachment of serine to tRNA(Ser). Is also able to aminoacylate tRNA(Sec) with serine, to form the misacylated tRNA L-seryl-tRNA(Sec), which will be further converted into selenocysteinyl-tRNA(Sec). This chain is Serine--tRNA ligase, found in Streptococcus thermophilus (strain ATCC BAA-491 / LMD-9).